Reading from the N-terminus, the 212-residue chain is MPTREIRHPLIRHKLGLMRRADISTKNFRELAQEVGALLTYEATKDLPLETYDIEGWAGTVQVEKIAGKKITVVPILRAGIGMLEGVLSLIPGAKVSAVGVARNEETLQAHTYLEKLVPEINERLAMIIDPMLATGSSMVATIDLLKKAGCKDIRAMVLVAAPEGIAAVEKAHPDVQIYTASIDERLNEHGYIIPGLGDAGDKIFGTKQKDA.

5-phospho-alpha-D-ribose 1-diphosphate contacts are provided by residues Arg-78, Arg-103, and 130–138 (DPMLATGSS). Uracil-binding positions include Ile-193 and 198–200 (GDA). Asp-199 lines the 5-phospho-alpha-D-ribose 1-diphosphate pocket.

It belongs to the UPRTase family. The cofactor is Mg(2+).

The enzyme catalyses UMP + diphosphate = 5-phospho-alpha-D-ribose 1-diphosphate + uracil. The protein operates within pyrimidine metabolism; UMP biosynthesis via salvage pathway; UMP from uracil: step 1/1. Its activity is regulated as follows. Allosterically activated by GTP. Functionally, catalyzes the conversion of uracil and 5-phospho-alpha-D-ribose 1-diphosphate (PRPP) to UMP and diphosphate. The sequence is that of Uracil phosphoribosyltransferase from Pseudomonas fluorescens (strain SBW25).